The primary structure comprises 358 residues: MTQPNLNIVPFVSVDHMMKLVLRVGVETFLKELAGYVEEDFRRWQNFDKTPRVASHSKEGVIELMPTSDGTLYGFKYVNGHPKNTRDGLQTVTAFGVLANVGSGYPMLLTEMTILTALRTAATSAVAAKHLAPKNARTMAIIGNGAQSEFQALAFKAILGVDKLRLYDLDPQATAKCIRNLQGAGFDIVACKSVEEAVEGADIITTVTADKANATILTDNMVGAGVHINAVGGDCPGKTELHGDILRRSDIFVEYPPQTRIEGEIQQLPEDYPVNELWEVITGRIAGRKDARQITLFDSVGFATEDFSALRYVRDKLKDTGLYEQLDLLADPDEPRDLYGMLLRHEKLLQSESTKPAA.

2 residues coordinate L-ornithine: arginine 52 and lysine 76. NAD(+) contacts are provided by residues threonine 91, arginine 119, 146 to 147 (AQ), aspartate 168, threonine 208, 231 to 234 (VGGD), lysine 238, and serine 299. Arginine 119 contributes to the L-ornithine binding site. Aspartate 234 contributes to the L-ornithine binding site. Aspartate 234 functions as the Proton donor/acceptor in the catalytic mechanism. Position 300 (valine 300) interacts with L-ornithine.

The protein belongs to the ornithine cyclodeaminase/mu-crystallin family. NAD(+) serves as cofactor.

The enzyme catalyses L-ornithine = L-proline + NH4(+). The protein operates within amino-acid biosynthesis; L-proline biosynthesis; L-proline from L-ornithine: step 1/1. Its function is as follows. Catalyzes the conversion of L-ornithine into L-proline with release of ammonia. This is Ornithine cyclodeaminase from Brucella suis biovar 1 (strain 1330).